Here is a 504-residue protein sequence, read N- to C-terminus: Anaerobic nitric oxide reductase transcription regulator NorR (504 aa).

The residue at position 57 (aspartate 57) is a 4-aspartylphosphate. The region spanning 187-416 (MIGLSPGMTQ…LEHAIHRAVV (230 aa)) is the Sigma-54 factor interaction domain. Residues 215–222 (GETGTGKE) and 278–287 (ADNGTLFLDE) contribute to the ATP site. The segment at residues 479–498 (WAASARMLETDVANLHRLAK) is a DNA-binding region (H-T-H motif).

It functions in the pathway nitrogen metabolism; nitric oxide reduction. In terms of biological role, required for the expression of anaerobic nitric oxide (NO) reductase, acts as a transcriptional activator for at least the norVW operon. Activation also requires sigma-54. In Escherichia coli O7:K1 (strain IAI39 / ExPEC), this protein is Anaerobic nitric oxide reductase transcription regulator NorR.